We begin with the raw amino-acid sequence, 428 residues long: Monocarboxylate transporter 13 (428 aa).

Residues 1 to 10 (MVHRTEPPDG) lie on the Cytoplasmic side of the membrane. The next 12 membrane-spanning stretches (helical) occupy residues 11–31 (GWGW…FGVL), 52–72 (VSWI…IGSA), 81–101 (PVVM…SFAT), 106–126 (LYLS…TPTL), 139–159 (LAMG…APLF), 172–192 (LLLV…LRPL), 221–241 (VALT…VAHL), 244–264 (LGWD…SDLV), 283–303 (LLML…VAQA), 309–329 (VLAV…FSVI), 338–358 (IYCG…LGAP), and 374–394 (FVVA…LPHF). Over 395 to 428 (FSCISLSTSRPQDLVIEAPDTKIPLPKEEGLGEN) the chain is Cytoplasmic.

Belongs to the major facilitator superfamily. Monocarboxylate porter (TC 2.A.1.13) family.

Its subcellular location is the golgi apparatus membrane. It is found in the cell membrane. Proton-linked monocarboxylate transporter. May catalyze the transport of monocarboxylates across the plasma membrane. The polypeptide is Monocarboxylate transporter 13 (Slc16a13) (Rattus norvegicus (Rat)).